The following is a 693-amino-acid chain: Glycine--tRNA ligase beta subunit (693 aa).

It belongs to the class-II aminoacyl-tRNA synthetase family. As to quaternary structure, tetramer of two alpha and two beta subunits.

It is found in the cytoplasm. It catalyses the reaction tRNA(Gly) + glycine + ATP = glycyl-tRNA(Gly) + AMP + diphosphate. The sequence is that of Glycine--tRNA ligase beta subunit from Vibrio vulnificus (strain YJ016).